A 202-amino-acid chain; its full sequence is GTP cyclohydrolase 1 (202 aa).

Residues Cys-90, His-93, and Cys-163 each contribute to the Zn(2+) site.

It belongs to the GTP cyclohydrolase I family. As to quaternary structure, toroid-shaped homodecamer, composed of two pentamers of five dimers.

It carries out the reaction GTP + H2O = 7,8-dihydroneopterin 3'-triphosphate + formate + H(+). Its pathway is cofactor biosynthesis; 7,8-dihydroneopterin triphosphate biosynthesis; 7,8-dihydroneopterin triphosphate from GTP: step 1/1. The polypeptide is GTP cyclohydrolase 1 (Mycolicibacterium vanbaalenii (strain DSM 7251 / JCM 13017 / BCRC 16820 / KCTC 9966 / NRRL B-24157 / PYR-1) (Mycobacterium vanbaalenii)).